The primary structure comprises 332 residues: L-lactate dehydrogenase C chain (332 aa).

Blocked amino end (Ser) is present on Ser2. NAD(+) is bound by residues 29-57 (GNVGMACAISILLKGLADELALVDADTNK) and Arg99. Residues Arg106, Asn138, and Arg169 each contribute to the substrate site. Asn138 contacts NAD(+). The Proton acceptor role is filled by His193. Residue Thr248 participates in substrate binding.

It belongs to the LDH/MDH superfamily. LDH family. Homotetramer. Interacts with RABL2/RABL2A; binds preferentially to GTP-bound RABL2. Expressed within the midpiece of sperm tail (at protein level).

It is found in the cytoplasm. It catalyses the reaction (S)-lactate + NAD(+) = pyruvate + NADH + H(+). The protein operates within fermentation; pyruvate fermentation to lactate; (S)-lactate from pyruvate: step 1/1. Functionally, possible role in sperm motility. This chain is L-lactate dehydrogenase C chain (Ldhc), found in Mus musculus (Mouse).